Here is a 391-residue protein sequence, read N- to C-terminus: MVKLENSRKPEKISNKNIPMSDFVVNLDHGDPTAYEEYWRKMGDRCTVTIRGCDLMSYFSDMTNLCWFLEPELEDAIKDLHGVVGNAATEDRYIVVGTGSTQLCQAAVHALSSLARSQPVSVVAAAPFYSTYVEETTYVRSGMYKWEGDAWGFDKKGPYIELVTSPNNPDGTIRETVVNRPDDDEAKVIHDFAYYWPHYTPITRRQDHDIMLFTFSKITGHAGSRIGWALVKDKEVAKKMVEYIIVNSIGVSKESQVRTAKILNVLKETCKSESESENFFKYGREMMKNRWEKLREVVKESDAFTLPKYPEAFCNYFGKSLESYPAFAWLGTKEETDLVSELRRHKVMSRAGERCGSDKKHVRVSMLSREDVFNVFLERLANMKLIKSIDL.

Pyridoxal 5'-phosphate-binding positions include Tyr-58, 100 to 101 (ST), Asn-168, 191 to 194 (DFAY), 214 to 217 (TFSK), and Arg-225. At Lys-217 the chain carries N6-(pyridoxal phosphate)lysine.

It belongs to the alliinase family. Requires pyridoxal 5'-phosphate as cofactor. As to expression, expressed at the leaf margin and in the vasculature of emerging young leaves. Expressed in the quiescent center and in the vasculature of root tips. Detected in the shoot apical meristem, stems, sepals, stamen filaments, the shoot and root junction, the stigma and the base of the silique.

The protein localises to the cytoplasm. It carries out the reaction L-tryptophan + 2-oxoglutarate = indole-3-pyruvate + L-glutamate. The enzyme catalyses L-tryptophan + pyruvate = indole-3-pyruvate + L-alanine. The protein operates within plant hormone metabolism; auxin biosynthesis. With respect to regulation, inhibited by L-kynurenine. L-tryptophan aminotransferase involved in auxin (IAA) biosynthesis. Can convert L-tryptophan and pyruvate to indole-3-pyruvic acid (IPA) and alanine. Catalyzes the first step in IPA branch of the auxin biosynthetic pathway. Required for auxin production to initiate multiple change in growth in response to environmental and developmental cues. It is also active with phenylalanine, tyrosine, leucine, alanine, methionine and glutamine. Both TAA1 and TAR2 are required for maintaining proper auxin levels in roots, while TAA1, TAR1 and TAR2 are required for proper embryo patterning. Involved in the maintenance of the root stem cell niches and required for shade avoidance. This is L-tryptophan--pyruvate aminotransferase 1 (TAA1) from Arabidopsis thaliana (Mouse-ear cress).